A 280-amino-acid polypeptide reads, in one-letter code: Pantothenate synthetase (280 aa).

Residue 30 to 37 participates in ATP binding; that stretch reads MGALHRGH. Histidine 37 acts as the Proton donor in catalysis. (R)-pantoate is bound at residue glutamine 61. Residue glutamine 61 participates in beta-alanine binding. 148–151 serves as a coordination point for ATP; sequence GEKD. Glutamine 154 provides a ligand contact to (R)-pantoate. Residues valine 177 and 185–188 contribute to the ATP site; that span reads LSSR.

Belongs to the pantothenate synthetase family. Homodimer.

The protein localises to the cytoplasm. The catalysed reaction is (R)-pantoate + beta-alanine + ATP = (R)-pantothenate + AMP + diphosphate + H(+). The protein operates within cofactor biosynthesis; (R)-pantothenate biosynthesis; (R)-pantothenate from (R)-pantoate and beta-alanine: step 1/1. Its function is as follows. Catalyzes the condensation of pantoate with beta-alanine in an ATP-dependent reaction via a pantoyl-adenylate intermediate. This is Pantothenate synthetase from Azobacteroides pseudotrichonymphae genomovar. CFP2.